Here is a 337-residue protein sequence, read N- to C-terminus: Protoheme IX farnesyltransferase (337 aa).

Positions 1 to 17 (MPFSISKDTVSNQTTHV) are enriched in polar residues. Positions 1–41 (MPFSISKDTVSNQTTHVATAPASQRPDPVETKVEQEQGRPR) are disordered. Positions 27–41 (DPVETKVEQEQGRPR) are enriched in basic and acidic residues. 8 helical membrane-spanning segments follow: residues 59 to 79 (IIEL…HGVP), 81 to 101 (LGLV…ANVF), 130 to 150 (SALI…GFGA), 153 to 173 (LSAA…SMLL), 196 to 216 (WTAV…IVFW), 250 to 270 (VAIQ…VLWP), 271 to 291 (VAHM…VFIV), and 311 to 331 (PMGL…AIAV).

Belongs to the UbiA prenyltransferase family. Protoheme IX farnesyltransferase subfamily.

It localises to the cell membrane. The enzyme catalyses heme b + (2E,6E)-farnesyl diphosphate + H2O = Fe(II)-heme o + diphosphate. It functions in the pathway porphyrin-containing compound metabolism; heme O biosynthesis; heme O from protoheme: step 1/1. Functionally, converts heme B (protoheme IX) to heme O by substitution of the vinyl group on carbon 2 of heme B porphyrin ring with a hydroxyethyl farnesyl side group. The chain is Protoheme IX farnesyltransferase from Cutibacterium acnes (strain DSM 16379 / KPA171202) (Propionibacterium acnes).